A 227-amino-acid chain; its full sequence is MSRPIIVFDLDGTLIDTAPDLLDSLNHSLAASELTAVDEAGFRRFVGHGGRVMIERAHAAQQRSLDVAEHDRLLKLFLDHYTDNIPGKSRPYPGVIEAIARFEKAGYLLAICTNKYEANSLALIEALGLTRHFAAIAGQDTFAFRKPDPRHLTETIRLAGGDAHRALMVGDSQTDIDTAKAAGIPVVAVDFGYTDRHVREFEPSAVISHFDALTVELAERLIRAAGH.

Residue Asp9 is the Nucleophile of the active site. Mg(2+)-binding residues include Asp9, Asp11, and Asp171.

Belongs to the HAD-like hydrolase superfamily. CbbY/CbbZ/Gph/YieH family. It depends on Mg(2+) as a cofactor.

The catalysed reaction is 2-phosphoglycolate + H2O = glycolate + phosphate. Its pathway is organic acid metabolism; glycolate biosynthesis; glycolate from 2-phosphoglycolate: step 1/1. Functionally, specifically catalyzes the dephosphorylation of 2-phosphoglycolate. Is involved in the dissimilation of the intracellular 2-phosphoglycolate formed during the DNA repair of 3'-phosphoglycolate ends, a major class of DNA lesions induced by oxidative stress. The sequence is that of Phosphoglycolate phosphatase from Mesorhizobium japonicum (strain LMG 29417 / CECT 9101 / MAFF 303099) (Mesorhizobium loti (strain MAFF 303099)).